The chain runs to 442 residues: DNA topoisomerase 6 subunit A3 (442 aa).

The interval 1–34 (MSEKKRRGGAGAGAASGSASKKPRVSTAASYAES) is disordered. A Topo IIA-type catalytic domain is found at 91–224 (QDSASVTSRI…LHVVASEKGV (134 aa)). Tyr-185 serves as the catalytic O-(5'-phospho-DNA)-tyrosine intermediate. Mg(2+) is bound by residues Glu-271 and Asp-323.

This sequence belongs to the TOP6A family. In terms of assembly, homodimer. Heterotetramer of two TOP6A and two TOP6B subunits. Interacts with TOP6B. Mg(2+) serves as cofactor. Highly expressed in flowers before pollination. Expressed in roots and shoots.

The protein localises to the nucleus. It carries out the reaction ATP-dependent breakage, passage and rejoining of double-stranded DNA.. Functionally, component of the DNA topoisomerase VI involved in chromatin organization and progression of endoreduplication cycles. Relaxes both positive and negative superturns and exhibits a strong decatenase activity. May be involved in cell proliferation and stress tolerance. In Oryza sativa subsp. indica (Rice), this protein is DNA topoisomerase 6 subunit A3.